Reading from the N-terminus, the 486-residue chain is MDMKAHYIDGAMHLGCSEEHFTTYNPANGEPLANVKQANQQDMQAAIESAKRGFAIWSAMTATERSRILLKAVALLRERNDELAALEVADTGKPIQEANCVDIATGADVIEYYAGLAPSMHGEQQPLNESQFFYTRREPLGICAGIGAWNYPIQIAMWKSAPALAAGNAMIFKPSEETPLTALKLAEIYSEAGLPDGVFNVIQGDYRVGQMLTAHPDIAKVSFTGESGTGKVVMGDSAATLKQVTMELGGKSPMIIFDDAKLDDAVSAAMVANFYTQGEVCTHGTRVFVHEGIYDEFVVQLKKRTELLVVGDPLDEQTQIGALISKEHESKVLSAIEQAKASKATLLTGGYKVTENGLASGNFVVPTVFIDCEDDMPHVQQEIFGPVMSVLKFSDEDEVIARANNTDYGLAAGVFTQNLSRAHRVIHQIQAGICWINTWGDSPAEMPVGGYKLSGIGRENGVETLTHYTQTKSVLVHLGDFDSPYA.

The K(+) site is built by Thr-23 and Asp-90. 147–149 (GAW) contacts NAD(+). Catalysis depends on Lys-159, which acts as the Charge relay system. Residues 173–176 (KPSE) and 226–229 (ESGT) contribute to the NAD(+) site. Leu-241 is a K(+) binding site. Glu-247 serves as the catalytic Proton acceptor. NAD(+)-binding residues include Gly-249, Cys-281, and Glu-382. Catalysis depends on Cys-281, which acts as the Nucleophile. Residue Cys-281 is modified to Cysteine sulfenic acid (-SOH). Positions 452 and 455 each coordinate K(+). Glu-459 functions as the Charge relay system in the catalytic mechanism.

The protein belongs to the aldehyde dehydrogenase family. In terms of assembly, dimer of dimers. K(+) serves as cofactor.

The enzyme catalyses betaine aldehyde + NAD(+) + H2O = glycine betaine + NADH + 2 H(+). Its pathway is amine and polyamine biosynthesis; betaine biosynthesis via choline pathway; betaine from betaine aldehyde: step 1/1. Its function is as follows. Involved in the biosynthesis of the osmoprotectant glycine betaine. Catalyzes the irreversible oxidation of betaine aldehyde to the corresponding acid. This Vibrio campbellii (strain ATCC BAA-1116) protein is Betaine aldehyde dehydrogenase.